An 836-amino-acid polypeptide reads, in one-letter code: Neuroligin-2 (836 aa).

A signal peptide spans 1 to 14 (MWLLALCLVGLAGA). The Extracellular portion of the chain corresponds to 15-678 (QRGGGGPGGG…DSRDYSTELS (664 aa)). Residues asparagine 98 and asparagine 136 are each glycosylated (N-linked (GlcNAc...) asparagine). Intrachain disulfides connect cysteine 106/cysteine 141, cysteine 317/cysteine 328, and cysteine 487/cysteine 521. Asparagine 522 is a glycosylation site (N-linked (GlcNAc...) asparagine). The disordered stretch occupies residues 623-661 (PPYATRWPPRTPGPGTSGTRRPPPPATLPPESDIDLGPR). A helical membrane pass occupies residues 679–699 (VTVAVGASLLFLNILAFAALY). Positions 679–699 (VTVAVGASLLFLNILAFAALY) are required for interaction with LHFPL4. Residues 700–836 (YKRDRRQELR…LPHPHSTTRV (137 aa)) lie on the Cytoplasmic side of the membrane. Disordered regions lie at residues 711-735 (RRLS…TAGR) and 791-836 (LLPS…TTRV). Phosphoserine is present on residues serine 714 and serine 719. Positions 717–728 (GGSGSGVPGGGP) are enriched in gly residues. A compositionally biased stretch (pro residues) spans 796–819 (LGPPPPPPPPSLHPFGPFPPPPPT). Over residues 824–836 (NNTLPHPHSTTRV) the composition is skewed to polar residues.

Belongs to the type-B carboxylesterase/lipase family. As to quaternary structure, interacts with neurexins NRXN1, NRXN2 and NRXN3. Interaction with neurexins is mediated by heparan sulfate glycan modification on neurexin. Interacts (via its C-terminus) with DLG4/PSD-95 (via PDZ domain 3). Interacts with PATJ. Interacts with MDGA2. Interacts with GPHN. Interacts with MDGA1. Found in a complex with MAGI2 and IGSF9B, where it interacts with MAGI2 (via WW 1, WW 2 and PDZ 2 domains). Identified in a complex of 720 kDa composed of LHFPL4, NLGN2, GABRA1, GABRB2, GABRG2 and GABRB3. Interacts with LHFPL4; leading to mutual regulation of the protein level and synaptic clustering. Interacts with GABRA1. In terms of tissue distribution, brain and arteries. Detected in the retina outer plexiform layer (at protein level). Widely expressed. Detected in heart, brain, spleen, lung, liver, skeletal muscle, kidney and testis.

Its subcellular location is the cell membrane. It is found in the postsynaptic cell membrane. The protein resides in the presynaptic cell membrane. Transmembrane scaffolding protein involved in cell-cell interactions via its interactions with neurexin family members. Mediates cell-cell interactions both in neurons and in other types of cells, such as Langerhans beta cells. Mediates cell-cell interactions between Langerhans beta cells and modulates insulin secretion. Plays a role in synapse function and synaptic signal transmission, especially via gamma-aminobutyric acid receptors (GABA(A) receptors). Functions by recruiting and clustering synaptic proteins. Promotes clustering of postsynaptic GABRG2 and GPHN. Promotes clustering of postsynaptic LHFPL4. Modulates signaling by inhibitory synapses, and thereby plays a role in controlling the ratio of signaling by excitatory and inhibitory synapses and information processing. Required for normal signal amplitude from inhibitory synapses, but is not essential for normal signal frequency. May promote the initial formation of synapses, but is not essential for this. In vitro, triggers the de novo formation of presynaptic structures. In Mus musculus (Mouse), this protein is Neuroligin-2 (Nlgn2).